Reading from the N-terminus, the 280-residue chain is Nocamycin O-methyltransferase (280 aa).

Belongs to the methyltransferase superfamily.

The enzyme catalyses nocamycin E + S-adenosyl-L-methionine = nocamycin I + S-adenosyl-L-homocysteine. It participates in antibiotic biosynthesis. In terms of biological role, involved in the biosynthesis of nocamycin I and nocamycin II. Catalyzes the methylation of nocamycin E to yield nocamycin I. The polypeptide is Nocamycin O-methyltransferase (Saccharothrix syringae (Nocardiopsis syringae)).